The chain runs to 361 residues: Dual specificity mitogen-activated protein kinase kinase 6 (361 aa).

Basic and acidic residues-rich tracts occupy residues 1-11 (MEGGSDKESKV) and 37-48 (PKELKLPKEVFE). A disordered region spans residues 1–61 (MEGGSDKESK…PAPTPPRDLD (61 aa)). Residues 30 to 46 (VRGKKKLPKELKLPKEV) are d domain. Residues 80 to 341 (LEQIGELGRG…YTELMQHPFF (262 aa)) form the Protein kinase domain. ATP contacts are provided by residues 86–94 (LGRGAYGVV) and K109. The active-site Proton acceptor is D206. The residue at position 234 (S234) is a Phosphoserine; by MAPK3. The residue at position 238 (T238) is a Phosphothreonine; by MAPK3. The segment at 338–361 (HPFFTLHDSKDTDVASFVKTILGD) is DVD domain.

This sequence belongs to the protein kinase superfamily. STE Ser/Thr protein kinase family. MAP kinase kinase subfamily. In terms of assembly, dimer. Interacts (via its D domain) with its MAP kinase substrates. Interacts (via its DVD domain) with MAP3Ks activators. In terms of processing, weakly autophosphorylated. Phosphorylated at Ser-234 and Thr-238 by the majority of M3Ks.

The protein resides in the nucleus. It localises to the cytoplasm. It is found in the cytoskeleton. The enzyme catalyses L-seryl-[protein] + ATP = O-phospho-L-seryl-[protein] + ADP + H(+). It catalyses the reaction L-threonyl-[protein] + ATP = O-phospho-L-threonyl-[protein] + ADP + H(+). It carries out the reaction L-tyrosyl-[protein] + ATP = O-phospho-L-tyrosyl-[protein] + ADP + H(+). Its activity is regulated as follows. Activated by dual phosphorylation on Ser-234 and Thr-238 in response to a variety of cellular stresses, including UV radiation, osmotic shock, hypoxia, inflammatory cytokines, interferon gamma (IFNG), and less often by growth factors. MAP2K6/MKK6 is activated by the majority of M3Ks. In terms of biological role, dual specificity protein kinase which acts as an essential component of the MAP kinase signal transduction pathway. Catalyzes the concomitant phosphorylation of a threonine and a tyrosine residue in the MAP kinases p38 and plays an important role in the regulation of cellular responses to cytokines and all kinds of stresses. The p38 MAP kinase signal transduction pathway leads to direct activation of transcription factors. Phosphorylation by MAP2K6 asymmetrically activates p38 on one side of the blastodisc, an event which is necessary for blastomere cleavage. The chain is Dual specificity mitogen-activated protein kinase kinase 6 from Danio rerio (Zebrafish).